The following is a 269-amino-acid chain: G-protein coupled receptor homolog C3 (269 aa).

C28 and C107 are oxidised to a cystine. A run of 5 helical transmembrane segments spans residues 30–50, 71–91, 123–143, 165–185, and 200–220; these read IMSVLYYVGFFSNMFIITLMS, IGILMCCSAWLLSLILSSPVS, LMQIEITILGFLIPIIIFVYC, IVLMIVVCSLICWIPLYIVLM, and HLCLYLNLAYAITFSETISLA.

It belongs to the G-protein coupled receptor 1 family.

It is found in the host cell membrane. The polypeptide is G-protein coupled receptor homolog C3 (Sus scrofa (Pig)).